Reading from the N-terminus, the 412-residue chain is Putative competence-damage inducible protein (412 aa).

Belongs to the CinA family.

The polypeptide is Putative competence-damage inducible protein (Bacillus cereus (strain AH820)).